The sequence spans 454 residues: UPF0210 protein Mlab_1030 (454 aa).

Belongs to the UPF0210 family.

The polypeptide is UPF0210 protein Mlab_1030 (Methanocorpusculum labreanum (strain ATCC 43576 / DSM 4855 / Z)).